A 503-amino-acid polypeptide reads, in one-letter code: Secreted RxLR effector protein RXLR-C08 (503 aa).

An N-terminal signal peptide occupies residues M1–A22. Residues N27, N35, and N45 are each glycosylated (N-linked (GlcNAc...) asparagine). The short motif at D57–R60 is the dEER element. N108, N197, and N374 each carry an N-linked (GlcNAc...) asparagine glycan.

Belongs to the RxLR effector family.

It is found in the secreted. The protein resides in the host Golgi apparatus. In terms of biological role, secreted effector that suppresses pattern-triggered immunity (PTI) in plant host. The chain is Secreted RxLR effector protein RXLR-C08 from Plasmopara halstedii (Downy mildew of sunflower).